A 427-amino-acid polypeptide reads, in one-letter code: Serine protease HTRA2, mitochondrial (427 aa).

The interval 33-57 is disordered; that stretch reads HTASSSKGSGGDNSKDQENNGQNKS. A helical membrane pass occupies residues 67-87; the sequence is VFQFCVPFSLGALVSAVLIEG. The IAP-binding signature appears at 78–81; that stretch reads ALVS. The interval 144–307 is serine protease; it reads SNGSGFVIEQ…IPIDYVKVFL (164 aa). Residues H162, D194, and S271 each act as charge relay system in the active site. Residues 330-415 form the PDZ domain; it reads MGITMLTLTP…DLEIVILRGV (86 aa).

The protein belongs to the peptidase S1C family. Interacts with th/DIAP1 (via BIR 2 domain).

The protein resides in the mitochondrion intermembrane space. Its subcellular location is the mitochondrion membrane. The enzyme catalyses Cleavage of non-polar aliphatic amino-acids at the P1 position, with a preference for Val, Ile and Met. At the P2 and P3 positions, Arg is selected most strongly with a secondary preference for other hydrophilic residues.. Its function is as follows. Serine protease that shows proteolytic activity against a non-specific substrate beta-casein. Promotes or induces cell death either by direct binding to and inhibition of BIRC proteins (also called inhibitor of apoptosis proteins, IAPs), leading to an increase in caspase activity, or by a BIRC inhibition-independent, caspase-independent and serine protease activity-dependent mechanism. Can antagonize antiapoptotic activity of th/Diap1 by directly inducing the degradation of th/Diap1. The sequence is that of Serine protease HTRA2, mitochondrial from Drosophila persimilis (Fruit fly).